The primary structure comprises 142 residues: MYSGRTSYDENTRQLYKLDDNGNFVFVENISLDNYFDLLIDIYRTNDPIDELDCCFKLHDMDTNTNNISDIIKASHSLPVNMGHIDPVFYLGYPVIFIIGVTYFSIIASRKINPSDRLLNEIKEYRLTCQNVYRKKFSINFV.

N-linked (GlcNAc...) asparagine; by host glycosylation is found at Asn-29 and Asn-67. A helical transmembrane segment spans residues 88–108 (VFYLGYPVIFIIGVTYFSIIA).

It is found in the membrane. This is an uncharacterized protein from Acanthamoeba polyphaga mimivirus (APMV).